A 257-amino-acid polypeptide reads, in one-letter code: tRNA pseudouridine synthase A (257 aa).

Asp43 serves as the catalytic Nucleophile. Residue Tyr94 participates in substrate binding.

This sequence belongs to the tRNA pseudouridine synthase TruA family.

The enzyme catalyses uridine(38/39/40) in tRNA = pseudouridine(38/39/40) in tRNA. Functionally, formation of pseudouridine at positions 38, 39 and 40 in the anticodon stem and loop of transfer RNAs. The chain is tRNA pseudouridine synthase A from Pyrobaculum arsenaticum (strain DSM 13514 / JCM 11321 / PZ6).